The sequence spans 117 residues: Large ribosomal subunit protein uL18 (117 aa).

Belongs to the universal ribosomal protein uL18 family. As to quaternary structure, part of the 50S ribosomal subunit; part of the 5S rRNA/L5/L18/L25 subcomplex. Contacts the 5S and 23S rRNAs.

Functionally, this is one of the proteins that bind and probably mediate the attachment of the 5S RNA into the large ribosomal subunit, where it forms part of the central protuberance. In Francisella tularensis subsp. tularensis (strain FSC 198), this protein is Large ribosomal subunit protein uL18.